Here is a 257-residue protein sequence, read N- to C-terminus: tRNA uridine(34) hydroxylase (257 aa).

The region spanning 128–222 is the Rhodanese domain; sequence NGRRLVMLDA…YFEQVGGEGY (95 aa). C182 acts as the Cysteine persulfide intermediate in catalysis.

It belongs to the TrhO family.

It catalyses the reaction uridine(34) in tRNA + AH2 + O2 = 5-hydroxyuridine(34) in tRNA + A + H2O. Catalyzes oxygen-dependent 5-hydroxyuridine (ho5U) modification at position 34 in tRNAs. The protein is tRNA uridine(34) hydroxylase of Xylella fastidiosa (strain M23).